Consider the following 148-residue polypeptide: Large ribosomal subunit protein bL9 (148 aa).

It belongs to the bacterial ribosomal protein bL9 family.

Functionally, binds to the 23S rRNA. The protein is Large ribosomal subunit protein bL9 of Listeria welshimeri serovar 6b (strain ATCC 35897 / DSM 20650 / CCUG 15529 / CIP 8149 / NCTC 11857 / SLCC 5334 / V8).